Reading from the N-terminus, the 196-residue chain is Probable malonic semialdehyde reductase RutE (196 aa).

The protein belongs to the nitroreductase family. HadB/RutE subfamily. FMN serves as cofactor.

It catalyses the reaction 3-hydroxypropanoate + NADP(+) = 3-oxopropanoate + NADPH + H(+). Its function is as follows. May reduce toxic product malonic semialdehyde to 3-hydroxypropionic acid, which is excreted. The polypeptide is Probable malonic semialdehyde reductase RutE (Escherichia coli O81 (strain ED1a)).